An 816-amino-acid polypeptide reads, in one-letter code: Phenylalanine--tRNA ligase beta subunit (816 aa).

Residues 40–148 (FEELAALKTG…EGMAHGQRFI (109 aa)) enclose the tRNA-binding domain. The 79-residue stretch at 401–479 (KAVEVQRFSI…RIYGYDNVPT (79 aa)) folds into the B5 domain. 4 residues coordinate Mg(2+): Asp457, Asp463, Glu466, and Glu467. Residues 721–814 (PVYPAVKRDI…LTDRFGGSFR (94 aa)) enclose the FDX-ACB domain.

This sequence belongs to the phenylalanyl-tRNA synthetase beta subunit family. Type 1 subfamily. As to quaternary structure, tetramer of two alpha and two beta subunits. Mg(2+) serves as cofactor.

Its subcellular location is the cytoplasm. It carries out the reaction tRNA(Phe) + L-phenylalanine + ATP = L-phenylalanyl-tRNA(Phe) + AMP + diphosphate + H(+). The protein is Phenylalanine--tRNA ligase beta subunit of Desulfotalea psychrophila (strain LSv54 / DSM 12343).